The sequence spans 222 residues: UPF0758 protein YicR (222 aa).

An MPN domain is found at 100-222 (PLLSPEMTRE…YVSFAERGWI (123 aa)). The Zn(2+) site is built by His-171, His-173, and Asp-184. The short motif at 171–184 (HNHPSGCAEPSKAD) is the JAMM motif element.

The protein belongs to the UPF0758 family. YicR subfamily.

In Escherichia coli O45:K1 (strain S88 / ExPEC), this protein is UPF0758 protein YicR.